The following is an 802-amino-acid chain: Elongation factor G, mitochondrial (802 aa).

The N-terminal 24 residues, 1-24 (MRCPSLARLPNRALSGLTRSPVRL), are a transit peptide targeting the mitochondrion. The tr-type G domain occupies 100–387 (SRLRNIGIAA…GVIDYLPNPS (288 aa)). GTP-binding positions include 109–116 (AHIDSGKT), 185–189 (DTPGH), and 239–242 (NKMD).

Belongs to the TRAFAC class translation factor GTPase superfamily. Classic translation factor GTPase family. EF-G/EF-2 subfamily.

It localises to the mitochondrion. The protein operates within protein biosynthesis; polypeptide chain elongation. Mitochondrial GTPase that catalyzes the GTP-dependent ribosomal translocation step during translation elongation. During this step, the ribosome changes from the pre-translocational (PRE) to the post-translocational (POST) state as the newly formed A-site-bound peptidyl-tRNA and P-site-bound deacylated tRNA move to the P and E sites, respectively. Catalyzes the coordinated movement of the two tRNA molecules, the mRNA and conformational changes in the ribosome. In Aspergillus fumigatus (strain CBS 144.89 / FGSC A1163 / CEA10) (Neosartorya fumigata), this protein is Elongation factor G, mitochondrial (mef1).